Here is a 311-residue protein sequence, read N- to C-terminus: MAQFQIECVESRTDGARGQYGSFVIEALNQGQGITLGNALRRSILSDLEGTAIVAVRIAGVNHEFSTIPGVREDVLEILLNLKEVVFKSNNQESQIGRIKVQGPAIVTAGLFELSSDIEVVDPRQYIATICNNTIFEMEFKIEKSCGYRLAEKAVDELSLDFLQVDSVFMPVNKVNYKVEEVRVGTNSIKDRLILQIWTNGSISPQEAISQGATVLTNLFCSLRNLDFKSVDTYRNKEDKKISQVLIEELQLSVRAYNCLKRAQIHSIADLLDYSQEELLEIKNFGQKSAEEVIYALQKTLGISLPKEKTD.

The tract at residues 1–227 is alpha N-terminal domain (alpha-NTD); it reads MAQFQIECVE…NLFCSLRNLD (227 aa). Residues 242-311 form an alpha C-terminal domain (alpha-CTD) region; it reads ISQVLIEELQ…GISLPKEKTD (70 aa).

It belongs to the RNA polymerase alpha chain family. As to quaternary structure, in plastids the minimal PEP RNA polymerase catalytic core is composed of four subunits: alpha, beta, beta', and beta''. When a (nuclear-encoded) sigma factor is associated with the core the holoenzyme is formed, which can initiate transcription.

It localises to the plastid. It is found in the chloroplast. The catalysed reaction is RNA(n) + a ribonucleoside 5'-triphosphate = RNA(n+1) + diphosphate. In terms of biological role, DNA-dependent RNA polymerase catalyzes the transcription of DNA into RNA using the four ribonucleoside triphosphates as substrates. The polypeptide is DNA-directed RNA polymerase subunit alpha (Porphyra purpurea (Red seaweed)).